Consider the following 994-residue polypeptide: Chloride channel protein E (994 aa).

Residues 1–33 (MTRKENEESESLSSSSSPIDNSNNNNNNNNHSI) are disordered. The Cytoplasmic portion of the chain corresponds to 1–163 (MTRKENEESE…HWLGKERIST (163 aa)). The segment covering 11–32 (SLSSSSSPIDNSNNNNNNNNHS) has biased composition (low complexity). 11 consecutive transmembrane segments (helical) span residues 164-184 (LLFI…CDFL), 227-247 (IVFV…ISFI), 271-291 (VLGF…SAAG), 300-320 (FMHA…FGAI), 334-354 (ALTS…LFAI), 362-382 (VMGN…IFFL), 410-430 (LITF…FVFI), 449-469 (IILV…AGPL), 505-525 (LLVF…LPIP), 527-547 (GAIT…GEIL), and 554-574 (QAIE…SGTI). The 62-residue stretch at 644–705 (MKKNINYLSM…LDIHIENIEQ (62 aa)) folds into the CBS 1 domain. 3 disordered regions span residues 715–767 (FVNN…NSEN), 802–822 (IKPN…SDFE), and 846–872 (DENS…GDGI). 2 stretches are compositionally biased toward low complexity: residues 717-764 (NNNN…NSNN) and 809-822 (SSSN…SDFE). Acidic residues predominate over residues 859–870 (HDDEDDDEEEGD). The region spanning 944 to 994 (MDLAPSQVPDLTPLNKVFHLFTMLGLGFTYVTSLGKLVGVITKNSLMEQDL) is the CBS 2 domain.

This sequence belongs to the chloride channel (TC 2.A.49) family.

Its subcellular location is the membrane. Functionally, voltage-gated chloride channel. Chloride channels may have several functions including the regulation of cell volume, membrane potential stabilization and signal transduction. In Dictyostelium discoideum (Social amoeba), this protein is Chloride channel protein E (clcE).